A 222-amino-acid polypeptide reads, in one-letter code: GMP/IMP nucleotidase YrfG (222 aa).

Asp-9 functions as the Nucleophile in the catalytic mechanism. Mg(2+) is bound by residues Asp-9 and Asp-11. Substrate is bound by residues 9-11 and Lys-149; that span reads DVD. Asp-174 is a binding site for Mg(2+).

It belongs to the HAD-like hydrolase superfamily. Requires Mg(2+) as cofactor. Mn(2+) serves as cofactor. It depends on Co(2+) as a cofactor. The cofactor is Zn(2+).

The enzyme catalyses a ribonucleoside 5'-phosphate + H2O = a ribonucleoside + phosphate. Catalyzes the dephosphorylation of different purine nucleotides (GMP and IMP). Also hydrolyzes flavin mononucleotide (FMN). The sequence is that of GMP/IMP nucleotidase YrfG (yrfG) from Escherichia coli (strain K12).